Consider the following 81-residue polypeptide: UPF0180 protein BLi01634/BL05144 (81 aa).

The protein belongs to the UPF0180 family.

The chain is UPF0180 protein BLi01634/BL05144 from Bacillus licheniformis (strain ATCC 14580 / DSM 13 / JCM 2505 / CCUG 7422 / NBRC 12200 / NCIMB 9375 / NCTC 10341 / NRRL NRS-1264 / Gibson 46).